Reading from the N-terminus, the 503-residue chain is Podocalyxin (503 aa).

The signal sequence occupies residues 1–21 (MPPTTALSALLLLLLSPASHS). The interval 19–236 (SHSHNGNETS…PLTSQTPGIT (218 aa)) is disordered. Polar residues predominate over residues 20 to 50 (HSHNGNETSTSAIKSSTVQSHQSATTSTEVT). Residues 22-404 (HNGNETSTSA…PPEVNEDRFS (383 aa)) are Extracellular-facing. 3 N-linked (GlcNAc...) asparagine glycosylation sites follow: asparagine 25, asparagine 89, and asparagine 94. Positions 61 to 91 (STQPSNPTPFTTSTQSPSMPTSTPNPTSNQS) are enriched in low complexity. Residues 107 to 126 (TSSPSSTAFTSSSGQTASSG) show a composition bias toward low complexity. Over residues 131 to 183 (DSFTTAPTTTLGLINVSSQPTDLNTTSKLLSTPTTDNTTSPQQPVDSSPSTAS) the composition is skewed to polar residues. Residues asparagine 145, asparagine 154, asparagine 167, and asparagine 206 are each glycosylated (N-linked (GlcNAc...) asparagine). Low complexity predominate over residues 196 to 208 (SSSGSTPSTDNST). Polar residues predominate over residues 222–236 (SEATQPLTSQTPGIT). The N-linked (GlcNAc...) asparagine glycan is linked to asparagine 303. Residues 405–425 (LPLIITIVCMASFLLLVAALY) form a helical membrane-spanning segment. The Cytoplasmic segment spans residues 426–503 (GCCHQRISQR…DLDEEEDTHL (78 aa)). Position 463 is a phosphothreonine (threonine 463). At serine 482 the chain carries Phosphoserine. A Phosphothreonine modification is found at threonine 501.

The protein belongs to the podocalyxin family. In terms of assembly, monomer; when associated with the membrane raft. Oligomer; when integrated in the apical membrane. Found in a complex with EZR, PODXL and NHERF2. Associates with the actin cytoskeleton through complex formation with EZR and NHERF2. Interacts (via the C-terminal PDZ-binding motif DTHL) with NHERF1 (via the PDZ domains); interaction is not detected in glomerular epithelium cells, take place early in the secretory pathway and is necessary for its apical membrane sorting. Interacts (via the C-terminal PDZ-binding motif DTHL) with NHERF2 (via the PDZ 1 domain); interaction is detected in glomerular epithelium cells. Interacts with EZR. N- and O-linked glycosylated. Sialoglycoprotein. As to expression, expressed in liver cells and hematopoietic cells (at protein level). Glomerular epithelium cell (podocyte).

The protein localises to the apical cell membrane. It is found in the cell projection. It localises to the microvillus. The protein resides in the membrane raft. Its subcellular location is the lamellipodium. The protein localises to the filopodium. It is found in the ruffle. It localises to the membrane. Involved in the regulation of both adhesion and cell morphology and cancer progression. Functions as an anti-adhesive molecule that maintains an open filtration pathway between neighboring foot processes in the podocyte by charge repulsion. Acts as a pro-adhesive molecule, enhancing the adherence of cells to immobilized ligands, increasing the rate of migration and cell-cell contacts in an integrin-dependent manner. Induces the formation of apical actin-dependent microvilli. Involved in the formation of a preapical plasma membrane subdomain to set up initial epithelial polarization and the apical lumen formation during renal tubulogenesis. Plays a role in cancer development and aggressiveness by inducing cell migration and invasion through its interaction with the actin-binding protein EZR. Affects EZR-dependent signaling events, leading to increased activities of the MAPK and PI3K pathways in cancer cells. The chain is Podocalyxin (Podxl) from Mus musculus (Mouse).